We begin with the raw amino-acid sequence, 38 residues long: Cytochrome b6-f complex subunit 5 (38 aa).

The chain crosses the membrane as a helical span at residues 5-25 (LLSGIVLGSIPITLAGSFVTA).

The protein belongs to the PetG family. The 4 large subunits of the cytochrome b6-f complex are cytochrome b6, subunit IV (17 kDa polypeptide, PetD), cytochrome f and the Rieske protein, while the 4 small subunits are PetG, PetL, PetM and PetN. The complex functions as a dimer.

It localises to the plastid. Its subcellular location is the chloroplast thylakoid membrane. Component of the cytochrome b6-f complex, which mediates electron transfer between photosystem II (PSII) and photosystem I (PSI), cyclic electron flow around PSI, and state transitions. PetG is required for either the stability or assembly of the cytochrome b6-f complex. This chain is Cytochrome b6-f complex subunit 5, found in Huperzia lucidula (Shining clubmoss).